Reading from the N-terminus, the 375-residue chain is 1-deoxy-D-xylulose 5-phosphate reductoisomerase (375 aa).

Residues threonine 12, glycine 13, serine 14, isoleucine 15, asparagine 39, and asparagine 115 each contribute to the NADPH site. Lysine 116 is a binding site for 1-deoxy-D-xylulose 5-phosphate. Glutamate 117 contacts NADPH. Aspartate 141 contacts Mn(2+). 1-deoxy-D-xylulose 5-phosphate contacts are provided by serine 142, glutamate 143, serine 163, and histidine 186. Glutamate 143 contacts Mn(2+). Glycine 192 contacts NADPH. Positions 199, 204, 205, and 208 each coordinate 1-deoxy-D-xylulose 5-phosphate. Position 208 (glutamate 208) interacts with Mn(2+).

This sequence belongs to the DXR family. Requires Mg(2+) as cofactor. It depends on Mn(2+) as a cofactor.

It catalyses the reaction 2-C-methyl-D-erythritol 4-phosphate + NADP(+) = 1-deoxy-D-xylulose 5-phosphate + NADPH + H(+). It functions in the pathway isoprenoid biosynthesis; isopentenyl diphosphate biosynthesis via DXP pathway; isopentenyl diphosphate from 1-deoxy-D-xylulose 5-phosphate: step 1/6. Functionally, catalyzes the NADPH-dependent rearrangement and reduction of 1-deoxy-D-xylulose-5-phosphate (DXP) to 2-C-methyl-D-erythritol 4-phosphate (MEP). In Thermotoga neapolitana (strain ATCC 49049 / DSM 4359 / NBRC 107923 / NS-E), this protein is 1-deoxy-D-xylulose 5-phosphate reductoisomerase.